Here is a 150-residue protein sequence, read N- to C-terminus: Large ribosomal subunit protein bL9 (150 aa).

Belongs to the bacterial ribosomal protein bL9 family.

In terms of biological role, binds to the 23S rRNA. The protein is Large ribosomal subunit protein bL9 of Pseudarthrobacter chlorophenolicus (strain ATCC 700700 / DSM 12829 / CIP 107037 / JCM 12360 / KCTC 9906 / NCIMB 13794 / A6) (Arthrobacter chlorophenolicus).